Reading from the N-terminus, the 317-residue chain is Pectinesterase 31 (317 aa).

Residues threonine 91 and glutamine 121 each coordinate substrate. Residue aspartate 144 is the Proton donor of the active site. Aspartate 165 (nucleophile) is an active-site residue. Residues arginine 222 and tryptophan 224 each coordinate substrate.

The protein belongs to the pectinesterase family. As to expression, expressed in siliques.

It catalyses the reaction [(1-&gt;4)-alpha-D-galacturonosyl methyl ester](n) + n H2O = [(1-&gt;4)-alpha-D-galacturonosyl](n) + n methanol + n H(+). Its pathway is glycan metabolism; pectin degradation; 2-dehydro-3-deoxy-D-gluconate from pectin: step 1/5. Its activity is regulated as follows. Does not require salt for activity. Not inhibited by kiwi pectin methylesterase inhibitor (PMEI). Functionally, acts in the modification of cell walls via demethylesterification of cell wall pectin. Acts in a blockwise manner, resulting in a cell wall rigidification. This Arabidopsis thaliana (Mouse-ear cress) protein is Pectinesterase 31 (PME31).